The following is a 2149-amino-acid chain: MDSILSKQLVDKTGFVRVPIKHFDCTMLTLALPTFDVSKMVDRITIDFNLDDIQGASEIGSTLLPSMSIDVEDMANFVHDFTFGHLADKTDRLLMREFPMMNDGFDHLSPDMIIKTTSGVYNIVEFTNFRGDERGAFQAAMIKLAKYEVPCENRSQGRTVVLYVVSAYRAWCMVYLELERTLKQREMVYRYRLALSVMDELRTLFPELSSTDEELGKTERELPAMVSSIQINWSVTESVFPPFSREMFDRFRSSPPDSEYITRIVSRCLINSQEKLINSSFFAEGNDKALRFSKNAEECSLAVERALNQYRAEDNLRDLNDHKSTIQLPPWLSYHDVDGKDLCPLQGLDVRGDHPMCNLWREVVTSANLEEIERMHDDAAAELEFAFGSKGQARERNRYHRVHLNMGSDVLVYIAALGVNGKKHKADTLVQQMRDRSKQPFSPDHDVITYLNFSLHALVTCGQQMRTCTALSLVIRDSVGSPEDSSAILVRKGFHEIITEHYKFMGSRIGHGCQMVSLIGAELSASVKQHVKPNYFVIKRLLGSGIFLLIKPTSSKSHIFVSFALSALAGPLISPLPGFSSPTKMLGILLVTDFVSYKLSKLTNLCKCVSLMESSFSFWAEAFGIQAGTLVGDFVPRSSDSAAMDASYMGKLSLLTLLEDKAATEELQTIARYIIMEGFVSPPEIPKPHKMTSKFPKVLRSELQVYLLNCLCRTIQRIAGEPFILKKKDGSISWGGMFNPFSGRPLLDMQPLISCCYNGYFKNKEEETEPSSLSGMYKKIIELEHLRPQSDAFLGYKDPELPRMHEFSVSYLKEACNHAKLVLRSLYGQNFMEQIDNQIIRELSGLTLERLATLKATSNFNENWYVYKDVADKNYTRDKLLVKMSKYASEGKSLAIQKFEDCMRQIESQGCMHICLFKKQQHGGLREIYVMGAEERIVQSVVETIARSIGKFFASDTLCNPPNKVKIPETHGIRARKQCKGPVWTCATSDDARKWNQGHFVTKFALMLCEFTSPKWWPLIIRGCSMFTKKRMMMNLNYLKILDGHRELDIRDDFVMDLFKAYHGEAEVPWAFKGKTYLETTTGMMQGILHYTSSLLHTIHQEYIRSLSFKIFNLKVAPEMSKSLVCDMMQGSDDSSMLISFPADDEKVLTRCKVAAAICFRMKKELGVYLAIYPSEKSTANTDFVMEYNSEFYFHTQHVRPTIRWIAACCSLPEVETLVARQEEASNLMTSVTEGGGSFSLAAIIQQAQCTLHYMLMGMGVSELFLEYKKAVLKWNDPGLGFFLLDNPYACGLGGFRFNLFKAITRTDLQKLYAFFMKKVKGSAARDWADEDVTIPETCSVSPGGALILSSSLKWGSRKKFQKLRDRLNIPENWIELINENPEVLYRAPRTGPEILLRIAEKVHSPGVVSSLSSGNAVCKVMASAVYFLSATIFEDTGRPEFNFLEDSKYSLLQKMAAYSGFHGFNDMEPEDILFLFPNIEELESLDSIVYNKGEIDIIPRVNIRDATQTRVTIFNEQKNLRTSPEKLVSDKWFGTQKSRIGKTTFLAEWEKLKKIVKWLEDAPEATLAHTPLNNHIQVRNFFARMESKPRTVRITGAPVKKRSGVSKIAMVIRDHFSRMGHLRGVEDLAGFTRSVSAEILKHFLFCILQGPYSESYKLQLIYRVLSSVSNVEIKESDGKTKTNLIGILQRFLDGDHVVPIIEEMGAGTVGGFIKRQQSKVVQNKVVYYGVGIWRGFMDGYQVHLEIENDIGQPPRLRNVTTNCQSSPWDLSIPIRQWAEDMGVTNNQDYSSKSSRGARYWMHSFRMQGPSKPFGCPVYIIKGDMSDVIRLRKEEVEMKVRGSTLNLYTKHHSHQDLHILSYTASDNDLSPGIFKSISDEGVAQALQLFEREPSNCWVRCESVAPKFISAILEICEGKRQIKGINRTRLSEIVRICSESSLRSKVGSMFSFVANVEEAHDVDYDALMDLMIEDAKNNAFSHVVDCIELDVSGPYEMESFHGRSTLTCTPSTILIRTYTFYLTLHQTMISVQAFQVILDEGVLLIALVNNYLRGSKANCWVRCESVAPKFISAILEICEGKRQIKGINRTRLSEIVEFVLNLPKIKSRIYVLICRQCHGANFPPISVRRLMLEDIASVARRLIIVASFGS.

Residues 18–216 (VPIKHFDCTM…ELSSTDEELG (199 aa)) are endonuclease. Residues His-79, Asp-111, and Glu-125 each coordinate Mn(2+). The active-site For endonuclease activity is the Lys-143. Positions 975-1166 (ARKQCKGPVW…AICFRMKKEL (192 aa)) constitute a RdRp catalytic domain. Residue Asp-1134 coordinates Mg(2+). The tract at residues 1706–1822 (GAGTVGGFIK…PFGCPVYIIK (117 aa)) is cap-binding.

This sequence belongs to the Bunyavirales RNA polymerase family. As to quaternary structure, homomultimer. Interacts with glycoprotein N; this interaction allows efficient polymerase packaging into virus particles. Interacts with nucleoprotein N. Mn(2+) serves as cofactor. Requires Mg(2+) as cofactor.

Its subcellular location is the host Golgi apparatus. It is found in the host endoplasmic reticulum. The protein localises to the host endoplasmic reticulum-Golgi intermediate compartment. It localises to the virion. It catalyses the reaction RNA(n) + a ribonucleoside 5'-triphosphate = RNA(n+1) + diphosphate. Functionally, RNA-dependent RNA polymerase, which is responsible for the replication and transcription of the viral RNA genome using antigenomic RNA as an intermediate. During transcription, synthesizes subgenomic RNAs and assures their capping by a cap-snatching mechanism, which involves the endonuclease activity cleaving the host capped pre-mRNAs. These short capped RNAs are then used as primers for viral transcription. The 3'-end of subgenomic mRNAs molecules are not polyadenylated. During replication, the polymerase binds the 5' and 3' vRNA extremities at distinct sites. In turn, significant conformational changes occur in the polymerase and in vRNA to initiate active RNA synthesis. As a consequence of the use of the same enzyme for both transcription and replication, these mechanisms need to be well coordinated. This is RNA-directed RNA polymerase L (L) from Aedes (Bovine).